The sequence spans 266 residues: GTP cyclohydrolase III (266 aa).

This sequence belongs to the archaeal-type GTP cyclohydrolase family.

It catalyses the reaction GTP + 3 H2O = 2-amino-5-formylamino-6-(5-phospho-D-ribosylamino)pyrimidin-4(3H)-one + 2 phosphate + 2 H(+). In terms of biological role, catalyzes the formation of 2-amino-5-formylamino-6-ribofuranosylamino-4(3H)-pyrimidinone ribonucleotide monophosphate and inorganic phosphate from GTP. Also has an independent pyrophosphate phosphohydrolase activity. The protein is GTP cyclohydrolase III of Methanococcus maripaludis (strain C7 / ATCC BAA-1331).